The following is a 133-amino-acid chain: Small ribosomal subunit protein uS9 (133 aa).

The tract at residues 111–133 (PRRSESKKFGGPGARARKQKSYR) is disordered.

The protein belongs to the universal ribosomal protein uS9 family.

The sequence is that of Small ribosomal subunit protein uS9 from Methanosphaera stadtmanae (strain ATCC 43021 / DSM 3091 / JCM 11832 / MCB-3).